Reading from the N-terminus, the 568-residue chain is Urease subunit alpha (568 aa).

The region spanning 130–568 is the Urease domain; the sequence is GGIDTHIHFI…LPMAQRYFLF (439 aa). Positions 135, 137, and 218 each coordinate Ni(2+). N6-carboxylysine is present on lysine 218. Residue histidine 220 coordinates substrate. Ni(2+)-binding residues include histidine 247 and histidine 273. The active-site Proton donor is histidine 321. Residue aspartate 361 participates in Ni(2+) binding.

The protein belongs to the metallo-dependent hydrolases superfamily. Urease alpha subunit family. In terms of assembly, heterotrimer of UreA (gamma), UreB (beta) and UreC (alpha) subunits. Three heterotrimers associate to form the active enzyme. The cofactor is Ni cation. Carboxylation allows a single lysine to coordinate two nickel ions.

The protein resides in the cytoplasm. It carries out the reaction urea + 2 H2O + H(+) = hydrogencarbonate + 2 NH4(+). It functions in the pathway nitrogen metabolism; urea degradation; CO(2) and NH(3) from urea (urease route): step 1/1. This is Urease subunit alpha from Burkholderia pseudomallei (strain 1106a).